The sequence spans 96 residues: Probable quinol oxidase subunit 4 (96 aa).

3 consecutive transmembrane segments (helical) span residues 8-28 (TVGF…TLYT), 36-56 (ITII…MFMH), and 68-88 (FKVL…YWVM).

The protein belongs to the cytochrome c oxidase bacterial subunit 4 family.

Its subcellular location is the cell membrane. The enzyme catalyses 2 a quinol + O2 = 2 a quinone + 2 H2O. Catalyzes quinol oxidation with the concomitant reduction of oxygen to water. This is Probable quinol oxidase subunit 4 (qoxD) from Staphylococcus saprophyticus subsp. saprophyticus (strain ATCC 15305 / DSM 20229 / NCIMB 8711 / NCTC 7292 / S-41).